We begin with the raw amino-acid sequence, 453 residues long: Chromosomal replication initiator protein DnaA (453 aa).

The tract at residues 1–73 (MNISPQYLWN…AQEVASVVGY (73 aa)) is domain I, interacts with DnaA modulators. Residues 73–112 (YPVDIQLTTAEGETMAMTGEAQSYQEKSLTQIAPESPKLN) form a domain II region. A domain III, AAA+ region region spans residues 113 to 329 (QLNPRYTFSR…GALIRAIAYT (217 aa)). Glycine 157, glycine 159, lysine 160, and threonine 161 together coordinate ATP. A domain IV, binds dsDNA region spans residues 330-453 (SISGLSMTVQ…RINMASRTQS (124 aa)).

Belongs to the DnaA family. Oligomerizes as a right-handed, spiral filament on DNA at oriC.

It is found in the cytoplasm. Plays an essential role in the initiation and regulation of chromosomal replication. ATP-DnaA binds to the origin of replication (oriC) to initiate formation of the DNA replication initiation complex once per cell cycle. Binds the DnaA box (a 9 base pair repeat at the origin) and separates the double-stranded (ds)DNA. Forms a right-handed helical filament on oriC DNA; dsDNA binds to the exterior of the filament while single-stranded (ss)DNA is stabiized in the filament's interior. The ATP-DnaA-oriC complex binds and stabilizes one strand of the AT-rich DNA unwinding element (DUE), permitting loading of DNA polymerase. After initiation quickly degrades to an ADP-DnaA complex that is not apt for DNA replication. Binds acidic phospholipids. The chain is Chromosomal replication initiator protein DnaA from Rippkaea orientalis (strain PCC 8801 / RF-1) (Cyanothece sp. (strain PCC 8801)).